Reading from the N-terminus, the 664-residue chain is Chaperone protein DnaK (664 aa).

Thr201 is subject to Phosphothreonine; by autocatalysis. Residues 574 to 592 (LKEDASTEKIKEASEELSR) are compositionally biased toward basic and acidic residues. The disordered stretch occupies residues 574 to 664 (LKEDASTEKI…DVEIVDKPND (91 aa)). Over residues 600-617 (AMQSQSASAAPSSAANAQ) the composition is skewed to low complexity. Polar residues predominate over residues 639–649 (GNSTSASSNNE).

It belongs to the heat shock protein 70 family.

Its function is as follows. Acts as a chaperone. The chain is Chaperone protein DnaK from Chlamydia felis (strain Fe/C-56) (Chlamydophila felis).